The sequence spans 354 residues: Variable large protein 15/16 (354 aa).

Positions 1–18 (MRKRISAIIMTLFMVLVS) are cleaved as a signal peptide. Cys19 is lipidated: N-palmitoyl cysteine. The S-diacylglycerol cysteine moiety is linked to residue Cys19. Residues 333 to 354 (EDKSVEATNTAEATTSGQQAKN) are disordered. The segment covering 338–354 (EATNTAEATTSGQQAKN) has biased composition (polar residues).

The protein belongs to the variable large protein (Vlp) family. Delta subfamily.

Its subcellular location is the cell outer membrane. Functionally, the Vlp and Vsp proteins are antigenically distinct proteins, only one vlp or vsp gene is transcriptionally active at any one time. Switching between these genes is a mechanism of host immune response evasion. The polypeptide is Variable large protein 15/16 (Borrelia hermsii).